The primary structure comprises 82 residues: Large ribosomal subunit protein bL31 (82 aa).

4 residues coordinate Zn(2+): Cys-16, Cys-18, Cys-37, and Cys-40.

The protein belongs to the bacterial ribosomal protein bL31 family. Type A subfamily. As to quaternary structure, part of the 50S ribosomal subunit. The cofactor is Zn(2+).

Functionally, binds the 23S rRNA. The protein is Large ribosomal subunit protein bL31 of Blochmanniella pennsylvanica (strain BPEN).